The sequence spans 172 residues: Endoribonuclease YbeY (172 aa).

Residues 1 to 21 form a disordered region; it reads MTLHVGAEPAPREDDTEDALR. A compositionally biased stretch (basic and acidic residues) spans 10 to 21; sequence APREDDTEDALR. Zn(2+) is bound by residues His134, His138, and His144.

Belongs to the endoribonuclease YbeY family. Zn(2+) serves as cofactor.

The protein resides in the cytoplasm. Its function is as follows. Single strand-specific metallo-endoribonuclease involved in late-stage 70S ribosome quality control and in maturation of the 3' terminus of the 16S rRNA. This chain is Endoribonuclease YbeY, found in Burkholderia lata (strain ATCC 17760 / DSM 23089 / LMG 22485 / NCIMB 9086 / R18194 / 383).